The primary structure comprises 87 residues: Small ribosomal subunit protein uS17 (87 aa).

The protein belongs to the universal ribosomal protein uS17 family. In terms of assembly, part of the 30S ribosomal subunit.

In terms of biological role, one of the primary rRNA binding proteins, it binds specifically to the 5'-end of 16S ribosomal RNA. The chain is Small ribosomal subunit protein uS17 from Heliobacterium modesticaldum (strain ATCC 51547 / Ice1).